The primary structure comprises 313 residues: tRNA dimethylallyltransferase (313 aa).

Residue 11–18 coordinates ATP; it reads GPTACGKT. 13–18 provides a ligand contact to substrate; it reads TACGKT. Interaction with substrate tRNA regions lie at residues 36-39, 160-164, and 243-248; these read DSAL, QRIGR, and RCVGYR.

It belongs to the IPP transferase family. Monomer. The cofactor is Mg(2+).

The enzyme catalyses adenosine(37) in tRNA + dimethylallyl diphosphate = N(6)-dimethylallyladenosine(37) in tRNA + diphosphate. Catalyzes the transfer of a dimethylallyl group onto the adenine at position 37 in tRNAs that read codons beginning with uridine, leading to the formation of N6-(dimethylallyl)adenosine (i(6)A). The polypeptide is tRNA dimethylallyltransferase (Neisseria gonorrhoeae (strain NCCP11945)).